The sequence spans 57 residues: Large ribosomal subunit protein eL20 (57 aa).

Belongs to the eukaryotic ribosomal protein eL20 family. Part of the 50S ribosomal subunit. Binds 23S rRNA.

In Halorhabdus utahensis (strain DSM 12940 / JCM 11049 / AX-2), this protein is Large ribosomal subunit protein eL20.